The primary structure comprises 104 residues: Secreted RxLR effector protein 54 (104 aa).

The first 19 residues, 1–19 (MIFTLLGLALVATKSACIA), serve as a signal peptide directing secretion. The RxLR motif lies at 52–55 (RSLR). An N-linked (GlcNAc...) asparagine glycan is attached at Asn-64.

Belongs to the RxLR effector family.

It localises to the secreted. The protein localises to the host chloroplast envelope. Its subcellular location is the host mitochondrion. The protein resides in the host nucleus. It is found in the host cytoplasm. Functionally, secreted effector that completely suppresses the host cell death induced by cell death-inducing proteins. In Plasmopara viticola (Downy mildew of grapevine), this protein is Secreted RxLR effector protein 54.